A 357-amino-acid chain; its full sequence is RNA-binding protein 4B (357 aa).

RRM domains lie at 2-72 and 78-148; these read VKLF…ASKN and TKLH…LSTS. The CCHC-type zinc finger occupies 160-177; it reads SGCYRCGKEGHWSKECPV. The interval 196–357 is interaction with TNPO3; the sequence is AVRTPYTMGY…YVDRTRYSAF (162 aa).

Interacts with TNPO3, which may mediate nuclear import of the protein. As to expression, expressed in the suprachiasmatic nucleus (SCN) (at protein level). Expressed in the suprachiasmatic nucleus (SCN).

The protein resides in the nucleus. Its subcellular location is the nucleolus. Functionally, required for the translational activation of PER1 mRNA in response to circadian clock. Binds directly to the 3'-UTR of the PER1 mRNA. In Mus musculus (Mouse), this protein is RNA-binding protein 4B (Rbm4b).